We begin with the raw amino-acid sequence, 90 residues long: UPF0297 protein lmo1503 (90 aa).

It belongs to the UPF0297 family.

This is UPF0297 protein lmo1503 from Listeria monocytogenes serovar 1/2a (strain ATCC BAA-679 / EGD-e).